The primary structure comprises 752 residues: Complement C2 (752 aa).

Positions 1–20 (MGPLMVLFCLLFLYPGLADS) are cleaved as a signal peptide. Sushi domains are found at residues 22-86 (PSCP…VCKP), 87-146 (VRCP…VCDN), and 149-206 (GHCP…ICRQ). Disulfide bonds link Cys-24/Cys-64, Cys-51/Cys-84, Cys-89/Cys-131, Cys-117/Cys-144, Cys-151/Cys-191, and Cys-177/Cys-204. Asn-29 carries an N-linked (GlcNAc...) asparagine glycan. An N-linked (GlcNAc...) asparagine glycan is attached at Asn-112. The 199-residue stretch at 254-452 (NLYLLLDCSQ…KALHQVFEHM (199 aa)) folds into the VWFA domain. The MIDAS-like motif signature appears at 260 to 264 (DCSQS). Mg(2+) contacts are provided by Ser-262 and Ser-264. Residues Asn-290 and Asn-333 are each glycosylated (N-linked (GlcNAc...) asparagine). Thr-337 contacts Mg(2+). Cystine bridges form between Cys-463/Cys-581, Cys-492/Cys-508, and Cys-584/Cys-600. The Peptidase S1 domain occupies 464–744 (GVGNMSANAS…MQPWLRQHLG (281 aa)). N-linked (GlcNAc...) asparagine glycosylation is found at Asn-467 and Asn-471. Catalysis depends on charge relay system residues His-507 and Asp-561. N-linked (GlcNAc...) asparagine glycosylation is present at Asn-621. Disulfide bonds link Cys-638-Cys-665 and Cys-675-Cys-705. The active-site Charge relay system is the Ser-679.

It belongs to the peptidase S1 family. As to quaternary structure, serine protease component of the C3 convertase, also named C4bC2b, composed of the serine protease complement C2b and complement C4b. Serine protease component of the C5 convertase, also named C4bC2bC3b, composed of the serine protease complement C2b, complement C3b, as well as complement C4b. It depends on Mg(2+) as a cofactor. Requires Mn(2+) as cofactor. Post-translationally, cleaved and activated by different proteases depending on the complement pathway to generate complement C2a and serine protease complement C2b chains. Cleaved and activated by C1S following activation by the classical complement system. Cleaved and activated by MASP2 following activation by the lectin complement system. Cleaved and activated by GZMK following activation by the GZMK complement system.

The protein resides in the secreted. It localises to the cell surface. It catalyses the reaction Selective cleavage of Arg-|-Ser bond in complement component C3 alpha-chain to form C3a and C3b, and Arg-|-Xaa bond in complement component C5 alpha-chain to form C5a and C5b.. Precursor of the catalytic component of the C3 and C5 convertase complexes, which are part of the complement pathway, a cascade of proteins that leads to phagocytosis and breakdown of pathogens and signaling that strengthens the adaptive immune system. Component C2 is part of the classical, lectin and GZMK complement systems. Functionally, catalytic component of the complement C3 and C5 convertase complexes. Following complement activation, recruited to the surface of pathogens by complement C4b opsonin to form the C3 convertase, or C3b and C4b opsonins to form the C5 convertase. As part of the C3 convertase, cleaves and activate C3 into C3a anaphylatoxin and C3b opsonin, the next components of the complement pathways. As part of the C5 convertase, cleaves and activate C5 into C5a anaphylatoxin and C5b component of the membrane attack complex. This is Complement C2 from Pongo pygmaeus (Bornean orangutan).